A 217-amino-acid polypeptide reads, in one-letter code: MEGSFSDGGALPEGLAEEAEPQGAAWSGDSGTVSQSHSSASGPWEDEGAEDGAPGRDLPLLRRAAAGYAACLLPGAGARPEVEALDASLEDLLTRVDEFVGMLDMLRGDSSHVVSEGVPRIHAKAAEMRRIYSRIDRLEAFVRMVGGRVARMEEQVTKAEAELGTFPRAFKKLLHTMNVPSLFSKSAPSRPQQAGYEAPVLFRTEDYFPCCSERPQL.

A disordered region spans residues 1–57; it reads MEGSFSDGGALPEGLAEEAEPQGAAWSGDSGTVSQSHSSASGPWEDEGAEDGAPGRD. A compositionally biased stretch (polar residues) spans 29 to 41; sequence DSGTVSQSHSSAS. The stretch at 136-165 forms a coiled coil; it reads DRLEAFVRMVGGRVARMEEQVTKAEAELGT. Thr165 carries the post-translational modification Phosphothreonine.

It belongs to the BLOC1S4 family. Interacts with BLOC1S5 and BLOC1S6. Component of the biogenesis of lysosome-related organelles complex 1 (BLOC-1) composed of BLOC1S1, BLOC1S2, BLOC1S3, BLOC1S4, BLOC1S5, BLOC1S6, DTNBP1/BLOC1S7 and SNAPIN/BLOC1S8. Octamer composed of one copy each BLOC1S1, BLOC1S2, BLOC1S3, BLOC1S4, BLOC1S5, BLOC1S6, DTNBP1/BLOC1S7 and SNAPIN/BLOC1S8. The BLOC-1 complex associates with the AP-3 protein complex and membrane protein cargos.

The protein localises to the cytoplasm. Functionally, component of the BLOC-1 complex, a complex that is required for normal biogenesis of lysosome-related organelles (LRO), such as platelet dense granules and melanosomes. In concert with the AP-3 complex, the BLOC-1 complex is required to target membrane protein cargos into vesicles assembled at cell bodies for delivery into neurites and nerve terminals. The BLOC-1 complex, in association with SNARE proteins, is also proposed to be involved in neurite extension. Plays a role in intracellular vesicle trafficking. This is Biogenesis of lysosome-related organelles complex 1 subunit 4 (BLOC1S4) from Homo sapiens (Human).